A 311-amino-acid polypeptide reads, in one-letter code: Transcription factor BIM2 (311 aa).

2 disordered regions span residues 1–60 and 271–311; these read MRTG…RRSK and ANQG…MKTL. Basic and acidic residues-rich tracts occupy residues 33-44 and 51-60; these read SNRDSKENDKAS and SVTEQRRRSK. The 51-residue stretch at 45 to 95 folds into the bHLH domain; sequence AIRSKHSVTEQRRRSKINERFQILRELIPNSEQKRDTASFLLEVIDYVQYL.

In terms of assembly, homodimer. Interacts with the N-terminus of BZR2/BES1. Expressed constitutively in roots, leaves, stems, and flowers.

Its subcellular location is the nucleus. In terms of biological role, positive brassinosteroid-signaling protein. The polypeptide is Transcription factor BIM2 (BIM2) (Arabidopsis thaliana (Mouse-ear cress)).